The primary structure comprises 961 residues: MDELGIPIYKRGFPEHLLHGYEFTIDSSTKIQSVGGRHDVTKLPEMNAYDIKSEGMRTALWYNPVRNDGFVLPRVLDITLRGYDGKRAVIDSSRHKSFHTDERWVQWMMKDSMDAQPLKVGLDDQTQKIAHSLHNCVVKIDSKKADTMSYHIEPIEDSLKGCLHTRTMLWNHLVRVEMSHAAQEIAYALKPTYDIVVHAERRDRSQPFRPGDQTLINFSRGQKVQMNHNSYEKMVEGLAHLVIRGKTPELIRDEITKLDEICNRWIRSRYDPGEIKAYELCKVLSTVGRKMLDQEKEPADEANLSIRFQEAIDNKFRQHDSERLKIFEHRNQRRDEDRFYILLMIAASDTFNTRVWWSNPYPCLRGTLIASETKLGDVYSMMRLWYDWSVRPTYIPYEKSREQEKYIYGRVNLFDYVAEPGTKIIHWEYKLNQQIKDITYEQGNPCDLFPDDDEAIVTKFDDVAYGQMVNDLINGGWDQERFKMHKILKSQGNVLTIDFEKDAKLTSNEGVAMPEYFDKWIIAPMFNAKLRIKHGEIAQRRNDDPMVKRTLSPIAFAPIVLQRLTLARFYDIRPAIMGQALSRQQGQSTYDEEISKIEGYAEILQRRGIVQIPKKPCPTVTAQYTLERYALFLINILEQHIIQSTDEDVMYSHPRVDYKLEVHGENIIDISQIVIFVFDFLFERRRTVRGVYESRYMVTRIRDAQGQNRINVITEFFPTFGYHLSRVKEATIIQEIMYLNFLPLFFLVSDNIIYTHKQWSVPLFLYAHELKVIPLEVGSYNDRCSLVSYIEYMVFFPSKAFRTSKLDEVQPKIAREMLKYYINTKIFEGGINLNVVTTKQLLYETYLASICGGLSDGIVWYLPITHPNKCLVAIEVSDERVPASIRASHIKLRFPLSVKHLKGIVIIQVDEEGKFTVYSEGIVSHRVCKKNLLKYMCDIVLLKFSGHVFGNDEMLTKLLNV.

It belongs to the orbivirus VP2 family.

Its subcellular location is the virion. The VP2 protein is one of the two proteins (with VP5) which constitute the virus particle outer capsid. It is the major target of the host immunogenic response. Responsible for viral attachment to target host cell, probably by binding to sialic acid. This attachment induces virion internalization predominantly through clathrin-dependent endocytosis. The polypeptide is Outer capsid protein VP2 (Segment-2) (Antilocapra americana (Pronghorn)).